Reading from the N-terminus, the 601-residue chain is Deuterosome assembly protein 1 (601 aa).

Coiled-coil stretches lie at residues 14-59 (CEAE…NAQT), 86-197 (TQNY…KQQR), and 226-278 (IEKL…LQSR). 2 disordered regions span residues 115 to 135 (MKQNQSHRKEASNKDETPFEL) and 188 to 213 (QTQLNGKQQRPEDSSPETPRLVCESS). Positions 121 to 131 (HRKEASNKDET) are enriched in basic and acidic residues. The segment at 307-326 (DNRKRVESSYSPSTKEPERK) is disordered. Residues 340-397 (HEKELNKMRSQLYQEEDLCSEQERMRNEISELTQELHQKEVTIATIMKKAALLERQLK) are a coiled coil. Serine 544 is modified (phosphoserine). Residues 555–586 (AAQHFLMEEEKRAKELEKLLNTHIDELQRHTE) are a coiled coil.

This sequence belongs to the CEP63 family. Interacts with CEP152; the interaction is mutually exclusive with CEP63.

It localises to the cytoplasm. Its function is as follows. Key structural component of the deuterosome, a structure that promotes de novo centriole amplification in multiciliated cells. Deuterosome-mediated centriole amplification occurs in terminally differentiated multiciliated cells and can generate more than 100 centrioles. Probably sufficient for the specification and formation of the deuterosome inner core. Interacts with CEP152 and recruits PLK4 to activate centriole biogenesis. In Rattus norvegicus (Rat), this protein is Deuterosome assembly protein 1.